Here is a 470-residue protein sequence, read N- to C-terminus: Ubiquitin carboxyl-terminal hydrolase calypso (470 aa).

The region spanning 11 to 241 (GWLELESDPG…ITHKLKMLRT (231 aa)) is the UCH catalytic domain. Catalysis depends on cysteine 98, which acts as the Nucleophile. Catalysis depends on histidine 177, which acts as the Proton donor. The stretch at 260-280 (ESRSQAEIRETVDKIKKEEQE) forms a coiled coil. The region spanning 392-420 (NYDEFICTFLSMLAYQGELGDLVTQHLVT) is the ULD domain. The segment at 422-470 (RKPSLGGVQNSGSRGVVRNYNKKSTTNGSSPKTPSSKRRRGRTKYRKRK) is positively charged C-terminal tail required for binding nucleosomes. Residues 423-434 (KPSLGGVQNSGS) are compositionally biased toward polar residues. The disordered stretch occupies residues 423–470 (KPSLGGVQNSGSRGVVRNYNKKSTTNGSSPKTPSSKRRRGRTKYRKRK). Positions 456–470 (SSKRRRGRTKYRKRK) are enriched in basic residues.

Belongs to the peptidase C12 family. BAP1 subfamily. Catalytic component of the polycomb repressive deubiquitinase (PR-DUB) complex, at least composed of caly/calypso, Asx and sba (MBD5/6 homolog). The PR-DUB complex associates with nucleosomes to mediate deubiquitination of histone H2AK118ub1 substrates; the association requires the positively charged C-terminal tail of caly, probably due to direct binding of DNA. Interacts (via ULD domain) with Asx (via DEUBAD domain); the interaction produces a stable heterodimer with a composite binding site for ubiquitin. Homodimerizes (via coiled-coil hinge-region between the UCH and ULD domains) to mediate assembly of 2 copies of the caly-Asx heterodimer into a bisymmetric tetramer; dimerization enhances PR-DUB association with nucleosomes.

It localises to the nucleus. It carries out the reaction Thiol-dependent hydrolysis of ester, thioester, amide, peptide and isopeptide bonds formed by the C-terminal Gly of ubiquitin (a 76-residue protein attached to proteins as an intracellular targeting signal).. Catalytic component of the polycomb repressive deubiquitinase (PR-DUB) complex, a complex that specifically mediates deubiquitination of histone H2A monoubiquitinated at 'Lys-119' (H2AK118ub1). Mediates bisymmetric organization of the PR-DUB complex and is involved in association with nucleosomes to mediate deubiquitination. Does not deubiquitinate monoubiquitinated histone H2B. Required to maintain the transcriptionally repressive state of homeotic genes throughout development. The PR-DUB complex has weak or no activity toward 'Lys-48'- and 'Lys-63'-linked polyubiquitin chains. Polycomb group (PcG) protein. The protein is Ubiquitin carboxyl-terminal hydrolase calypso of Culex quinquefasciatus (Southern house mosquito).